The sequence spans 145 residues: Acidic phospholipase A2 homolog textilotoxin C chain (145 aa).

The first 19 residues, 1 to 19 (MHPAHLLVLLGVYVSLLGA), serve as a signal peptide directing secretion. Positions 20-27 (ARIPPLPL) are excised as a propeptide. 7 disulfides stabilise this stretch: Cys38/Cys98, Cys54/Cys144, Cys56/Cys72, Cys71/Cys125, Cys78/Cys118, Cys87/Cys111, and Cys105/Cys116.

This sequence belongs to the phospholipase A2 family. Group I subfamily. D49 sub-subfamily. In terms of assembly, heterohexamer. 2 forms exist: 2 A or 2 B chains, 2 C chains and 2 covalently-linked D chains, and 1 A or 1 B, 1 C, 2 covalently-linked D chains and 2 differentially glycosylated covalently-linked D chains. Textilotoxin was originally described as pentameric. Expressed by the venom gland.

The protein localises to the secreted. In terms of biological role, snake venom oligomeric phospholipase A2 that has potent presynaptic neurotoxicity. Chain C is not itself neurotoxic, but it is essential for the neurotoxicity of textilotoxin. Chain C possesses a very low phospholipase activity. This is Acidic phospholipase A2 homolog textilotoxin C chain from Pseudonaja textilis (Eastern brown snake).